Reading from the N-terminus, the 293-residue chain is Acetylglutamate kinase (293 aa).

Residues 60–61 (GG), Arg-82, and Asn-188 each bind substrate.

It belongs to the acetylglutamate kinase family. ArgB subfamily.

The protein localises to the cytoplasm. It catalyses the reaction N-acetyl-L-glutamate + ATP = N-acetyl-L-glutamyl 5-phosphate + ADP. It functions in the pathway amino-acid biosynthesis; L-arginine biosynthesis; N(2)-acetyl-L-ornithine from L-glutamate: step 2/4. Catalyzes the ATP-dependent phosphorylation of N-acetyl-L-glutamate. In Methanothermobacter thermautotrophicus (strain ATCC 29096 / DSM 1053 / JCM 10044 / NBRC 100330 / Delta H) (Methanobacterium thermoautotrophicum), this protein is Acetylglutamate kinase.